We begin with the raw amino-acid sequence, 500 residues long: Probable cytosol aminopeptidase (500 aa).

The Mn(2+) site is built by Lys264 and Asp269. Lys276 is a catalytic residue. 3 residues coordinate Mn(2+): Asp287, Asp346, and Glu348. Residue Arg350 is part of the active site.

The protein belongs to the peptidase M17 family. Mn(2+) is required as a cofactor.

Its subcellular location is the cytoplasm. The enzyme catalyses Release of an N-terminal amino acid, Xaa-|-Yaa-, in which Xaa is preferably Leu, but may be other amino acids including Pro although not Arg or Lys, and Yaa may be Pro. Amino acid amides and methyl esters are also readily hydrolyzed, but rates on arylamides are exceedingly low.. It catalyses the reaction Release of an N-terminal amino acid, preferentially leucine, but not glutamic or aspartic acids.. Presumably involved in the processing and regular turnover of intracellular proteins. Catalyzes the removal of unsubstituted N-terminal amino acids from various peptides. This chain is Probable cytosol aminopeptidase, found in Nitrobacter winogradskyi (strain ATCC 25391 / DSM 10237 / CIP 104748 / NCIMB 11846 / Nb-255).